We begin with the raw amino-acid sequence, 226 residues long: LexA repressor (226 aa).

Residues 28 to 48 (RAEICQSLGFRSPNAAESHLR) constitute a DNA-binding region (H-T-H motif). Catalysis depends on for autocatalytic cleavage activity residues Ser133 and Lys170.

It belongs to the peptidase S24 family. In terms of assembly, homodimer.

It catalyses the reaction Hydrolysis of Ala-|-Gly bond in repressor LexA.. Functionally, represses a number of genes involved in the response to DNA damage (SOS response), including recA and lexA. In the presence of single-stranded DNA, RecA interacts with LexA causing an autocatalytic cleavage which disrupts the DNA-binding part of LexA, leading to derepression of the SOS regulon and eventually DNA repair. The chain is LexA repressor from Halorhodospira halophila (strain DSM 244 / SL1) (Ectothiorhodospira halophila (strain DSM 244 / SL1)).